A 393-amino-acid chain; its full sequence is MQFDNIDSALMALKNGETIIVVDDENRENEGDLVAVTEWMNDNTINFMAKEARGLICAPVSKDIAQRLDLVQMVDDNSDIFGTQFTVSIDHVDTTTGISAYERTLTAKKLIDPSSEAKDFNRPGHLFPLVAQDKGVLARNGHTEAAVDLAKLTGAKPAGVICEIMNDDGTMAKGQDLQNFKEKHQLKMITIDDLIEYRKKLEPEIEFKAKVKMPTDFGTFDMYGFKATYTDEEIVVLTKGAIRQHENVRLHSACLTGDIFHSQRCDCGAQLESSMKYINEHGGMIIYLPQEGRGIGLLNKLRAYELIEQGYDTVTANLALGFDEDLRDYHIAAQILKYFNIEHINLLSNNPSKFEGLKQYGIDIAERIEVIVPETVHNHDYMVTKKIKMGHLI.

The interval 1–200 (MQFDNIDSAL…IDDLIEYRKK (200 aa)) is DHBP synthase. Residues 27-28 (RE), Asp32, 139-143 (RNGHT), and Glu163 contribute to the D-ribulose 5-phosphate site. Glu28 serves as a coordination point for Mg(2+). A Mg(2+)-binding site is contributed by His142. A GTP cyclohydrolase II region spans residues 201–393 (LEPEIEFKAK…TKKIKMGHLI (193 aa)). 249-253 (RLHSA) contributes to the GTP binding site. The Zn(2+) site is built by Cys254, Cys265, and Cys267. GTP-binding positions include Gln270, 291 to 293 (EGR), and Thr313. Asp325 (proton acceptor; for GTP cyclohydrolase activity) is an active-site residue. Catalysis depends on Arg327, which acts as the Nucleophile; for GTP cyclohydrolase activity. Residues Ser348 and Lys353 each coordinate GTP.

It in the N-terminal section; belongs to the DHBP synthase family. This sequence in the C-terminal section; belongs to the GTP cyclohydrolase II family. The cofactor is Mg(2+). Mn(2+) is required as a cofactor. Requires Zn(2+) as cofactor.

The catalysed reaction is D-ribulose 5-phosphate = (2S)-2-hydroxy-3-oxobutyl phosphate + formate + H(+). It carries out the reaction GTP + 4 H2O = 2,5-diamino-6-hydroxy-4-(5-phosphoribosylamino)-pyrimidine + formate + 2 phosphate + 3 H(+). It functions in the pathway cofactor biosynthesis; riboflavin biosynthesis; 2-hydroxy-3-oxobutyl phosphate from D-ribulose 5-phosphate: step 1/1. It participates in cofactor biosynthesis; riboflavin biosynthesis; 5-amino-6-(D-ribitylamino)uracil from GTP: step 1/4. Its function is as follows. Catalyzes the conversion of D-ribulose 5-phosphate to formate and 3,4-dihydroxy-2-butanone 4-phosphate. Functionally, catalyzes the conversion of GTP to 2,5-diamino-6-ribosylamino-4(3H)-pyrimidinone 5'-phosphate (DARP), formate and pyrophosphate. The protein is Riboflavin biosynthesis protein RibBA of Staphylococcus aureus (strain Mu50 / ATCC 700699).